The sequence spans 350 residues: GDSL esterase/lipase At2g04570 (350 aa).

The signal sequence occupies residues 1 to 23; that stretch reads MGHLKSLFTILFLIAMSSTVTFA. Catalysis depends on Ser-35, which acts as the Nucleophile. Residues Asn-98 and Asn-117 are each glycosylated (N-linked (GlcNAc...) asparagine). Active-site residues include Asp-325 and His-328. The N-linked (GlcNAc...) asparagine glycan is linked to Asn-343.

This sequence belongs to the 'GDSL' lipolytic enzyme family.

The protein resides in the secreted. This is GDSL esterase/lipase At2g04570 from Arabidopsis thaliana (Mouse-ear cress).